A 311-amino-acid chain; its full sequence is MRKPTSSLTRRSVLGAGLGLGGALALGSTTASAASAGTTPSENPAAVRRLRALEREHQARIGVFALNLATGASLLHRAHELFPMCSVFKTLAAAAVLRDLDHDGSQLARVIRYTEADVTKSGHAPVTKDHIDTGMTIRDLCDATIRYSDNCAANLLLRELGGPTAVTRFCRSLGDPVTRLDRWEPELNSGEPDRRTDTTSPYAIARTYQRLVLGNALNRPDRALLTDWLLRNTTTLTTFRTGLPKGWTVADKSGGGDTYGTRNEAAIAWTPDGAPVLLTALTHKPSLPTAPGDTPLIIKLATVLSEAVAPA.

Positions 1–36 (MRKPTSSLTRRSVLGAGLGLGGALALGSTTASAASA) form a signal peptide, tat-type signal. Catalysis depends on Ser86, which acts as the Acyl-ester intermediate. 252 to 254 (KSG) lines the substrate pocket.

The protein belongs to the class-A beta-lactamase family. Predicted to be exported by the Tat system. The position of the signal peptide cleavage has not been experimentally proven.

It carries out the reaction a beta-lactam + H2O = a substituted beta-amino acid. Functionally, hydrolyzes benzylpenicillin and cloxacillin (at 10% of the rate of benzylpenicillin). The protein is Beta-lactamase (bla) of Streptomyces cellulosae.